The sequence spans 206 residues: Small ribosomal subunit protein uS5 (206 aa).

The segment covering 1–23 has biased composition (polar residues); it reads MTDTPTKQENQSKTENPPSSNAN. A disordered region spans residues 1-52; sequence MTDTPTKQENQSKTENPPSSNANEQRRGNRNNDRKRNRRGDSKNERDSEWQE. Basic and acidic residues predominate over residues 24–52; that stretch reads EQRRGNRNNDRKRNRRGDSKNERDSEWQE. An S5 DRBM domain is found at 50–113; it reads WQERVVQIRR…SDGKKHLVRV (64 aa).

The protein belongs to the universal ribosomal protein uS5 family. As to quaternary structure, part of the 30S ribosomal subunit. Contacts proteins S4 and S8.

Its function is as follows. With S4 and S12 plays an important role in translational accuracy. Functionally, located at the back of the 30S subunit body where it stabilizes the conformation of the head with respect to the body. The polypeptide is Small ribosomal subunit protein uS5 (Prochlorococcus marinus subsp. pastoris (strain CCMP1986 / NIES-2087 / MED4)).